We begin with the raw amino-acid sequence, 756 residues long: Polyribonucleotide nucleotidyltransferase (756 aa).

Residues D532 and D538 each contribute to the Mg(2+) site. Positions 598 to 657 (PRVTAIKVPVDKIGEVIGPKGKMINSITEQTGANISIEDDGTVFVGATDGPSAQAAIDMI) constitute a KH domain. One can recognise an S1 motif domain in the interval 669–738 (GERFLGTVVK…ARGKISLIPV (70 aa)).

It belongs to the polyribonucleotide nucleotidyltransferase family. Mg(2+) is required as a cofactor.

It localises to the cytoplasm. It carries out the reaction RNA(n+1) + phosphate = RNA(n) + a ribonucleoside 5'-diphosphate. Functionally, involved in mRNA degradation. Catalyzes the phosphorolysis of single-stranded polyribonucleotides processively in the 3'- to 5'-direction. The polypeptide is Polyribonucleotide nucleotidyltransferase (Rhodococcus erythropolis (strain PR4 / NBRC 100887)).